The following is a 147-amino-acid chain: MAPGPWPVSCLRGGPLGLTYLSLLLIPAAAGTYCECSLGLSREALIALLVVLAGISASCFCALVIVAIGVLRAKGETCPRQVDNRLVENFGVQEDLMDLHPVYVESQLMDADLEVSLVPPLEDQSLVAIPMEASSEEPPPPPPLPPE.

The N-terminal stretch at 1–31 (MAPGPWPVSCLRGGPLGLTYLSLLLIPAAAG) is a signal peptide. Residues 32–47 (TYCECSLGLSREALIA) are Extracellular-facing. A helical membrane pass occupies residues 48 to 68 (LLVVLAGISASCFCALVIVAI). Topologically, residues 69-147 (GVLRAKGETC…PPPPPPLPPE (79 aa)) are cytoplasmic. Residues 128 to 147 (AIPMEASSEEPPPPPPLPPE) are disordered. Pro residues predominate over residues 137-147 (EPPPPPPLPPE).

The protein localises to the membrane. The protein resides in the cytoplasmic vesicle. It localises to the secretory vesicle. Its subcellular location is the acrosome. The chain is Transmembrane protein 210 (TMEM210) from Homo sapiens (Human).